Here is a 124-residue protein sequence, read N- to C-terminus: Large ribosomal subunit protein bL12 (124 aa).

Positions 101-115 (ALSKDDAEKAKKELE) are enriched in basic and acidic residues. The tract at residues 101-124 (ALSKDDAEKAKKELEEAGATVELK) is disordered.

It belongs to the bacterial ribosomal protein bL12 family. Homodimer. Part of the ribosomal stalk of the 50S ribosomal subunit. Forms a multimeric L10(L12)X complex, where L10 forms an elongated spine to which 2 to 4 L12 dimers bind in a sequential fashion. Binds GTP-bound translation factors.

Functionally, forms part of the ribosomal stalk which helps the ribosome interact with GTP-bound translation factors. Is thus essential for accurate translation. In Hahella chejuensis (strain KCTC 2396), this protein is Large ribosomal subunit protein bL12.